A 224-amino-acid chain; its full sequence is Protein PLANT CADMIUM RESISTANCE 6 (224 aa).

Residues 131–151 (GMLYGLICCLFAIPCVYTCTF) traverse the membrane as a helical segment.

It belongs to the cornifelin family.

The protein resides in the membrane. Its function is as follows. May be involved in heavy metals transport. This Arabidopsis thaliana (Mouse-ear cress) protein is Protein PLANT CADMIUM RESISTANCE 6 (PCR6).